Here is a 194-residue protein sequence, read N- to C-terminus: Der GTPase-activating protein YihI (194 aa).

Residues 1–87 (MSRQKKSRNI…RDPRLGSRKK (87 aa)) are disordered. Basic and acidic residues predominate over residues 37 to 48 (TRYELDAKARED).

It belongs to the YihI family. As to quaternary structure, interacts with Der.

In terms of biological role, a GTPase-activating protein (GAP) that modifies Der/EngA GTPase function. May play a role in ribosome biogenesis. This chain is Der GTPase-activating protein YihI, found in Mannheimia succiniciproducens (strain KCTC 0769BP / MBEL55E).